The chain runs to 3530 residues: Unconventional myosin-XV (3530 aa).

Disordered stretches follow at residues 1 to 46, 615 to 710, and 730 to 1057; these read MAKE…RTPK, AGMD…PAHV, and EVPP…QKTL. The span at 663–681 shows a compositional bias: pro residues; that stretch reads PPVPPRPPSSGPPPAPPLS. Composition is skewed to low complexity over residues 682–693, 753–763, and 823–835; these read PALSGLPRPASP, AAFGFPGASPR, and SPAPRRAAGRLGP. Over residues 836-850 the composition is skewed to pro residues; sequence PGSPLPGSPRPPSPP. Residues 859-869 are compositionally biased toward low complexity; that stretch reads RSSLNLPSRLP. Basic and acidic residues predominate over residues 903-913; sequence PLEHRESPREP. Pro residues predominate over residues 1027 to 1038; sequence TKPPTPAPPKDV. The region spanning 1222–1899 is the Myosin motor domain; sequence DGVEDMTQLE…LYQLLESMRE (678 aa). An ATP-binding site is contributed by 1315-1322; that stretch reads GESGSGKT. Residues 1323 to 1350 adopt a coiled-coil conformation; it reads EATKLILRYLAAMNQKREVMQQIKILEA. Residues 1792–1799 form an actin-binding region; sequence FMRCLKPN. The interval 1888-2029 is neck or regulatory domain; it reads EHLYQLLESM…AQVPQVAPVR (142 aa). IQ domains lie at 1902–1924, 1925–1954, and 1955–1976; these read LNLAALTLQRCLRGFFIKRRFRS, LRHKIILLQSRARGYLARQRYQQMRRSLVK, and FRSLVHAYVSRRRYLKLRAEWR. The interval 2030 to 3530 is tail; sequence TPRLQAEPRV…TLPPSEITLL (1501 aa). One can recognise a MyTH4 1 domain in the interval 2065 to 2217; it reads MLTVPLRTPL…PTQLEWTATY (153 aa). 4 disordered regions span residues 2311–2381, 2414–2446, 2490–2509, and 2644–2665; these read AASR…GEPA, YRMKGGGQPGGGSSSGTEDTPRRPPEPKPIPGL, AEKPPAPEAQPTSVGTGPPA, and TSAPRPSMAPTSALPSRSLEPP. Positions 2349-2371 are enriched in polar residues; it reads GYSSHNQDGTNGETEAQRGTATH. Residues 2417 to 2427 show a composition bias toward gly residues; it reads KGGGQPGGGSS. An SH3 domain is found at 2867-2953; that stretch reads KDSDYVVAVR…PSELVQPAAA (87 aa). A MyTH4 2 domain is found at 3050 to 3204; that stretch reads FTKTPLQESL…PSSIELRAML (155 aa). The FERM domain occupies 3209-3530; the sequence is SKRQLFLLPG…TLPPSEITLL (322 aa).

This sequence belongs to the TRAFAC class myosin-kinesin ATPase superfamily. Myosin family. As to quaternary structure, interacts with the third PDZ domain of WHRN which is necessary for localization of WHRN to stereocilium tips. Interacts with EPS8. Interacts with FASLG. In terms of tissue distribution, highly expressed in pituitary. Also expressed at lower levels in adult brain, kidney, liver, lung, pancreas, placenta and skeletal muscle. Not expressed in brain. In the pituitary, highly expressed in anterior gland cells.

The protein resides in the cell projection. It localises to the stereocilium. Its subcellular location is the cytoplasm. The protein localises to the cytoskeleton. Functionally, myosins are actin-based motor molecules with ATPase activity. Unconventional myosins serve in intracellular movements. Their highly divergent tails are presumed to bind to membranous compartments, which would be moved relative to actin filaments. Required for the arrangement of stereocilia in mature hair bundles. This Homo sapiens (Human) protein is Unconventional myosin-XV (MYO15A).